A 61-amino-acid chain; its full sequence is Small ribosomal subunit protein uS14 (61 aa).

Positions 24, 27, 40, and 43 each coordinate Zn(2+).

Belongs to the universal ribosomal protein uS14 family. Zinc-binding uS14 subfamily. Part of the 30S ribosomal subunit. Contacts proteins S3 and S10. It depends on Zn(2+) as a cofactor.

In terms of biological role, binds 16S rRNA, required for the assembly of 30S particles and may also be responsible for determining the conformation of the 16S rRNA at the A site. This is Small ribosomal subunit protein uS14 from Rhodopirellula baltica (strain DSM 10527 / NCIMB 13988 / SH1).